The chain runs to 228 residues: MAAQQRDCGGAAQLAGPAAEADPLGRFTCPVCLEVYEKPVQVPCGHVFCSACLQECLKPKKPVCGVCRSALAPGVRAVELERQIESTETSCHGCRKNFFLSKIRSHVATCSKYQNYIMEGVKATIKDASLQPRNVPNRYTFPCPYCPEKNFDQEGLVEHCKLFHSTDTKSVVCPICASMPWGDPNYRSANFREHIQRRHRFSYDTFVDYDVDEEDMMNQVLQRSIIDQ.

The RING-type zinc-finger motif lies at cysteine 29–arginine 68. Positions 91 and 94 each coordinate Zn(2+). Residues cysteine 91–cysteine 110 form a C2HC RNF-type zinc finger. Residue lysine 102 is modified to N6-acetyllysine. Residues histidine 106 and cysteine 110 each contribute to the Zn(2+) site. N6-acetyllysine is present on lysine 112.

In terms of assembly, interacts with XAF1, the interaction increases XAF1 stability and proapoptotic effects, and may regulate IFN signaling. Autoubiquitinated. Polyubiquitinated in the presence of E2 enzymes UBE2D1, UBE2D2 and UBE2D3, but only monoubiquitinated in the presence of UBE2E1. In terms of tissue distribution, expressed in numerous tissues, including skin, CD4 lymphocytes and dendritic cells. Highest levels in testis.

It localises to the cytoplasm. The protein resides in the nucleus. It catalyses the reaction S-ubiquitinyl-[E2 ubiquitin-conjugating enzyme]-L-cysteine + [acceptor protein]-L-lysine = [E2 ubiquitin-conjugating enzyme]-L-cysteine + N(6)-ubiquitinyl-[acceptor protein]-L-lysine.. It participates in protein modification; protein ubiquitination. Its function is as follows. E3 ubiquitin-protein ligase that promotes the ubiquitination of various substrates. In turn, participates in the regulation of many biological processes including cell cycle, apoptosis, osteoclastogenesis as well as innate or adaptive immunity. Acts as a negative regulator of NF-kappa-B-dependent transcription by promoting the ubiquitination and stabilization of the NF-kappa-B inhibitor TNFAIP3. May promote the ubiquitination of TRAF6 as well. Also acts as a negative regulator of T-cell activation. Inhibits cellular dsRNA responses and interferon production by targeting MAVS component for proteasomal degradation. Ubiquitinates the CDK inhibitor CDKN1A leading to its degradationand probably also CDKN1B and CDKN1C. This activity stimulates cell cycle G1-to-S phase transition and suppresses cellular senescence. May play a role in spermatogenesis. The sequence is that of E3 ubiquitin-protein ligase RNF114 (RNF114) from Homo sapiens (Human).